We begin with the raw amino-acid sequence, 804 residues long: Phenylalanine--tRNA ligase beta subunit (804 aa).

Residues 40–155 (GEGIKGVVIG…NDAETGSDAL (116 aa)) enclose the tRNA-binding domain. The B5 domain maps to 409 to 484 (IEANNIHVSA…RLYGYDNIPS (76 aa)). The Mg(2+) site is built by D462, D468, E471, and E472. Residues 710-803 (PKYPSVTRDI…LEDTYQAVLR (94 aa)) enclose the FDX-ACB domain.

This sequence belongs to the phenylalanyl-tRNA synthetase beta subunit family. Type 1 subfamily. Tetramer of two alpha and two beta subunits. Requires Mg(2+) as cofactor.

The protein resides in the cytoplasm. The catalysed reaction is tRNA(Phe) + L-phenylalanine + ATP = L-phenylalanyl-tRNA(Phe) + AMP + diphosphate + H(+). The polypeptide is Phenylalanine--tRNA ligase beta subunit (pheT) (Bacillus subtilis (strain 168)).